The following is a 408-amino-acid chain: 26S proteasome regulatory subunit 6B homolog (408 aa).

Position 2 is an N-acetylalanine (Ala-2). Position 16 is a phosphoserine (Ser-16). Residues 28 to 75 (EDLYGRLKSLERQLEFTDIQEEYVKDEQKNLKRELLRAQEEVKRIQSV) are a coiled coil. 196-203 (GPPGTGKT) lines the ATP pocket.

This sequence belongs to the AAA ATPase family. As to quaternary structure, component of the 19S regulatory particle (RP/PA700) base subcomplex of the 26S proteasome. The 26S proteasome is composed of a core protease (CP), known as the 20S proteasome, capped at one or both ends by the 19S regulatory particle (RP/PA700). The RP/PA700 complex is composed of at least 17 different subunits in two subcomplexes, the base and the lid, which form the portions proximal and distal to the 20S proteolytic core, respectively. Expressed in dark-grown etiolated seedlings, roots, leaves, stems and flowers.

The protein localises to the cytoplasm. The protein resides in the nucleus. Its function is as follows. The 26S proteasome is involved in the ATP-dependent degradation of ubiquitinated proteins. The regulatory (or ATPase) complex confers ATP dependency and substrate specificity to the 26S complex. The polypeptide is 26S proteasome regulatory subunit 6B homolog (RPT3) (Arabidopsis thaliana (Mouse-ear cress)).